Here is a 505-residue protein sequence, read N- to C-terminus: Monocarboxylate transporter 6 (505 aa).

The Cytoplasmic segment spans residues 1–17 (MPQALERADGSWAWVVL). A helical transmembrane segment spans residues 18–38 (LATMVTQGLTLGFPTCIGIFF). Topologically, residues 39–53 (TELQWEFQASNSETS) are extracellular. A helical transmembrane segment spans residues 54–74 (WFPSILTAVLHMAGPLCSILV). At 75 to 80 (GRFGCR) the chain is on the cytoplasmic side. A helical transmembrane segment spans residues 81–101 (VTVMLGGVLASLGMVASSFSH). The Extracellular portion of the chain corresponds to 102 to 110 (NLSQLYFTA). Residues 111–131 (GFITGLGMCFSFQSSITVLGF) form a helical membrane-spanning segment. Residues 132–137 (YFVRRR) are Cytoplasmic-facing. Residues 138–158 (VLANALASMGVSLGITLWPLL) form a helical membrane-spanning segment. Residues 159 to 171 (SRYLLENLGWRGT) are Extracellular-facing. Residues 172-192 (FLVFGGIFLHCCICGAIIRPV) traverse the membrane as a helical segment. Residues 193-239 (ATSVAPETKECPPPPPETPALGCLAACGRTIQRHLAFDILRHNTGYC) lie on the Cytoplasmic side of the membrane. The helical transmembrane segment at 240-260 (VYILGVMWSVLGFPLPQVFLV) threads the bilayer. Topologically, residues 261 to 274 (PYAMWHSVDEQQAA) are extracellular. Residues 275-295 (LLISIIGFSNIFLRPLAGLMA) form a helical membrane-spanning segment. Residues 296–305 (GRPAFASHRK) are Cytoplasmic-facing. Residues 306 to 326 (YLFSLALLLNGLTNLVCAASG) form a helical membrane-spanning segment. Topologically, residues 327–329 (DFW) are extracellular. A helical transmembrane segment spans residues 330–350 (VLVGYCLAYSVSMSGIGALIF). Over 351–367 (QVLMDIVPMDQFPRALG) the chain is Cytoplasmic. The helical transmembrane segment at 368 to 388 (LFTVLDGLAFLISPPLAGLLL) threads the bilayer. The Extracellular portion of the chain corresponds to 389 to 396 (DATNNFSY). Residues 397 to 417 (VFYMSSFFLISAALFMGGSFY) form a helical membrane-spanning segment. Residues 418–505 (ALQKKEQGKQ…QTALGWNSPT (88 aa)) lie on the Cytoplasmic side of the membrane. The disordered stretch occupies residues 443 to 464 (KDGPGKQRSPEIMCQSSRQPRP).

It belongs to the major facilitator superfamily. Monocarboxylate porter (TC 2.A.1.13) family. In terms of tissue distribution, highly expressed in kidney.

The protein resides in the cell membrane. Its function is as follows. Proton-linked monocarboxylate transporter. Catalyzes the rapid transport across the plasma membrane of many monocarboxylates such as lactate, pyruvate, branched-chain oxo acids derived from leucine, valine and isoleucine, and the ketone bodies acetoacetate, beta-hydroxybutyrate and acetate. This is Monocarboxylate transporter 6 (SLC16A5) from Homo sapiens (Human).